Here is a 978-residue protein sequence, read N- to C-terminus: MALAVLHVLEPFPTETPPLAVLLPPGGPWPVTGVGLVLALRPASESPAGPALLVAAVEGSGAQCEQRGPGPPPLLVSRTLLRVLALSPGARVRARPVRRPPALGWALLGTSPGPGLGPRVGPLLVRRGETLPVPGSRVLETRPALQGLLGPGTRLAVTELQGRTKLDPESRDHNHPPPPPVVSSFAVSHSIRQLRGVLGGTGDALGVSRSCLRSLGLFQGEWVWVARVGELPNTSQPHLAQVQVLEPRWDLSARLGPNSGQPGEPLADGLVFVPATLAFNLGCDPLEVGELRIQRYLEDSTAAEDKGSCSLLPGPPFARELHIEVLPSPHCGVNGKYDHVLYQHFHTPRVVQEGDVLCVSTAGQVEILEGSLERLPRWREVFFKVKKTVGEAPDGPASAFLADTTHTSLYLAGTTLSRVPPLPSGRSPPWDSLSPPGLEALVNELCAVLKPHLQPGGTLLTGTSCVLLQGPPGSGKTTAVTAACSRLGLHLLKVPCSSLCADSSRTVETKLQTTFSRARRCRPVVLLLTALDLLGRDRDGLGEDARVVATLRHLLLDEDPLSRCPPLMVVATTSRVQDLPTDVRTAFPHELEVPVLSESQRLSVLQALTAHLPLGQEVNLSQLARRCAGFVVGDLYALLTHASRAACTRIKAAGLAMSEEDEGELCAAGFPLLAEDFGQALDQLQTAHSQAVGAPKIPSVSWHDVGGLQDVKKEILETIQLPLEHPELLSLGLRRSGLLLHGPPGTGKTLLAKAVATECSLTFLSVKGPELINMYVGQSEENVREVFARARAAAPCIIFFDELDSLAPSRGRSGDSGGVMDRVVSQLLAELDGLHSTQDVFVIGATNRPDLLDPALLRPGRFDKLVFVGASEDRASQLRVLSAITRKFKLEASVSLMNVLDCCPPQLTGADLYSLCSDAMMTALKRRVRDLEEGLEPRSSALLLTMEDLLQAAARLQPSVSEQELLRYKRIQRKFAAC.

Position 119 is an omega-N-methylarginine (R119). ATP is bound by residues 470–477 and 742–749; these read GPPGSGKT and GPPGTGKT.

This sequence belongs to the AAA ATPase family. Interacts with PEX1; forming the PEX1-PEX6 AAA ATPase complex, which is composed of a heterohexamer formed by a trimer of PEX1-PEX6 dimers. Interacts with PEX26; interaction is direct and promotes recruitment to peroxisomal membranes. Interacts with ZFAND6.

Its subcellular location is the cytoplasm. It localises to the cytosol. The protein resides in the peroxisome membrane. The protein localises to the cell projection. It is found in the cilium. Its subcellular location is the photoreceptor outer segment. It catalyses the reaction ATP + H2O = ADP + phosphate + H(+). Its function is as follows. Component of the PEX1-PEX6 AAA ATPase complex, a protein dislocase complex that mediates the ATP-dependent extraction of the PEX5 receptor from peroxisomal membranes, an essential step for PEX5 recycling. Specifically recognizes PEX5 monoubiquitinated at 'Cys-11', and pulls it out of the peroxisome lumen through the PEX2-PEX10-PEX12 retrotranslocation channel. Extraction by the PEX1-PEX6 AAA ATPase complex is accompanied by unfolding of the TPR repeats and release of bound cargo from PEX5. The polypeptide is Peroxisomal ATPase PEX6 (Rattus norvegicus (Rat)).